Consider the following 1169-residue polypeptide: Rabankyrin-5 (1169 aa).

N-acetylalanine is present on alanine 2. In terms of domain architecture, BTB spans 68 to 130; it reads SDLKIKVGDR…IYTDELEFRE (63 aa). 5 ANK repeats span residues 217–247, 255–284, 288–317, 322–362, and 366–396; these read KTEY…QLPG, NGDL…DVDM, SGWS…FVNA, AQET…NPNM, and KGRT…DLEL. Serine 270 is subject to Phosphoserine. Positions 421–423 match the NPF motif; the sequence is NPF. 16 ANK repeats span residues 490 to 519, 542 to 572, 588 to 617, 621 to 650, 654 to 683, 687 to 716, 724 to 753, 769 to 798, 802 to 832, 836 to 865, 870 to 899, 905 to 934, 938 to 967, 971 to 1001, 1005 to 1037, and 1043 to 1072; these read WGET…NPNL, HLQT…ALHA, RDQT…AIND, DGQT…DINV, DGET…DMSV, KGNP…DATC, CLQT…DVNS, DGQT…NVNA, EGRT…HLNV, QGLT…GAAE, KGRN…NVNS, SKLT…KVNE, HRQT…DFAA, NGNN…DAEA, RGQS…GYPL, and DGST…RLGV. Residues 650–759 are interaction with RHOD and RAB5A; the sequence is VRTQDGETAL…DVNSPRQPGA (110 aa). An FYVE-type zinc finger spans residues 1104–1164; sequence WCDGSYCYEC…VCNICFDVLT (61 aa). 8 residues coordinate Zn(2+): cysteine 1110, cysteine 1113, cysteine 1126, cysteine 1129, cysteine 1134, cysteine 1137, cysteine 1156, and cysteine 1159.

In terms of assembly, interacts with RAB5A (in GTP-bound form). Interacts with RHOD (independent of GTP-loaded status). Interacts with EHD1. Interacts with VPS26A; the interaction is independent of EHD1 and is indicative for an association with the cargo recognition subcomplex of the retromer complex. High expression in whole adult brain and intermediate expression in all other tissues and specific brain regions examined, including fetal brain.

It is found in the cytoplasm. The protein localises to the endosome membrane. The protein resides in the early endosome. Functionally, proposed effector of Rab5. Binds to phosphatidylinositol 3-phosphate (PI(3)P). Involved in homotypic early endosome fusion and to a lesser extent in heterotypic fusion of chlathrin-coated vesicles with early endosomes. Involved in macropinocytosis; the function is dependent on Rab5-GTP. Required for correct endosomal localization. Involved in the internalization and trafficking of activated tyrosine kinase receptors such as PDGFRB. Regulates the subcellular localization of the retromer complex in a EHD1-dependent manner. Involved in endosome-to-Golgi transport and biosynthetic transport to late endosomes and lysosomes indicative for a regulation of retromer complex-mediated retrograde transport. The protein is Rabankyrin-5 (ANKFY1) of Homo sapiens (Human).